The sequence spans 395 residues: S-adenosylmethionine synthase (395 aa).

ATP is bound at residue His-14. Residue Asp-16 participates in Mg(2+) binding. Residue Glu-42 coordinates K(+). Residues Glu-55 and Gln-98 each contribute to the L-methionine site. Residues 98-108 (QSPDIAMGVNK) form a flexible loop region. Residues 174 to 176 (DGK), 240 to 241 (RF), Asp-249, 255 to 256 (RK), Ala-272, and Lys-276 each bind ATP. Asp-249 provides a ligand contact to L-methionine. An L-methionine-binding site is contributed by Lys-280.

This sequence belongs to the AdoMet synthase family. As to quaternary structure, homotetramer; dimer of dimers. Requires Mg(2+) as cofactor. K(+) serves as cofactor.

It is found in the cytoplasm. It catalyses the reaction L-methionine + ATP + H2O = S-adenosyl-L-methionine + phosphate + diphosphate. It functions in the pathway amino-acid biosynthesis; S-adenosyl-L-methionine biosynthesis; S-adenosyl-L-methionine from L-methionine: step 1/1. In terms of biological role, catalyzes the formation of S-adenosylmethionine (AdoMet) from methionine and ATP. The overall synthetic reaction is composed of two sequential steps, AdoMet formation and the subsequent tripolyphosphate hydrolysis which occurs prior to release of AdoMet from the enzyme. The polypeptide is S-adenosylmethionine synthase (Caldanaerobacter subterraneus subsp. tengcongensis (strain DSM 15242 / JCM 11007 / NBRC 100824 / MB4) (Thermoanaerobacter tengcongensis)).